A 228-amino-acid polypeptide reads, in one-letter code: Cytochrome c oxidase subunit 2 (228 aa).

The Mitochondrial intermembrane segment spans residues 1–26 (MSTWANLGLQDSASPLMEQLIFFHDH). Residues 27 to 48 (ALLILVMITVLVGYLMFMLFFN) traverse the membrane as a helical segment. The Mitochondrial matrix segment spans residues 49–62 (NYVNRFLLHGQLIE). Residues 63 to 82 (MIWTILPAIILLFIALPSLR) form a helical membrane-spanning segment. Residues 83-228 (LLYLLDEINE…FIKWISSNNS (146 aa)) lie on the Mitochondrial intermembrane side of the membrane. Cu cation-binding residues include histidine 161, cysteine 196, glutamate 198, cysteine 200, histidine 204, and methionine 207. Glutamate 198 contacts Mg(2+).

The protein belongs to the cytochrome c oxidase subunit 2 family. In terms of assembly, component of the cytochrome c oxidase (complex IV, CIV), a multisubunit enzyme composed of a catalytic core of 3 subunits and several supernumerary subunits. The complex exists as a monomer or a dimer and forms supercomplexes (SCs) in the inner mitochondrial membrane with ubiquinol-cytochrome c oxidoreductase (cytochrome b-c1 complex, complex III, CIII). Cu cation serves as cofactor.

It localises to the mitochondrion inner membrane. The catalysed reaction is 4 Fe(II)-[cytochrome c] + O2 + 8 H(+)(in) = 4 Fe(III)-[cytochrome c] + 2 H2O + 4 H(+)(out). Functionally, component of the cytochrome c oxidase, the last enzyme in the mitochondrial electron transport chain which drives oxidative phosphorylation. The respiratory chain contains 3 multisubunit complexes succinate dehydrogenase (complex II, CII), ubiquinol-cytochrome c oxidoreductase (cytochrome b-c1 complex, complex III, CIII) and cytochrome c oxidase (complex IV, CIV), that cooperate to transfer electrons derived from NADH and succinate to molecular oxygen, creating an electrochemical gradient over the inner membrane that drives transmembrane transport and the ATP synthase. Cytochrome c oxidase is the component of the respiratory chain that catalyzes the reduction of oxygen to water. Electrons originating from reduced cytochrome c in the intermembrane space (IMS) are transferred via the dinuclear copper A center (CU(A)) of subunit 2 and heme A of subunit 1 to the active site in subunit 1, a binuclear center (BNC) formed by heme A3 and copper B (CU(B)). The BNC reduces molecular oxygen to 2 water molecules using 4 electrons from cytochrome c in the IMS and 4 protons from the mitochondrial matrix. The polypeptide is Cytochrome c oxidase subunit 2 (mt:CoII) (Drosophila simulans (Fruit fly)).